Consider the following 573-residue polypeptide: Globulin-1 S allele (573 aa).

Residues 1–18 (MVSARIVVLLAVLLCAAA) constitute a signal peptide (or 21). The propeptide occupies 19–86 (AVASSWEDDN…DRSGEGSSED (68 aa)). Residues 65-102 (EKRQERSRHEADDRSGEGSSEDEREREQEKEEKQKDRR) are disordered. Cupin type-1 domains follow at residues 104–262 (YVFD…DRLE) and 311–493 (YSLL…EEVD). A disordered region spans residues 288–315 (RHASEGGHGPHWPLPPFGESRGPYSLLD). N-linked (GlcNAc...) asparagine glycosylation is present at asparagine 349. 2 disordered regions span residues 382–416 (PHRQSQGGESERERGKGRRSEEEEESSEEQEEVGQ) and 498–573 (SRRE…TARM). Basic and acidic residues predominate over residues 390–402 (ESERERGKGRRSE). Acidic residues predominate over residues 403 to 413 (EEEESSEEQEE). 2 stretches are compositionally biased toward basic and acidic residues: residues 525–542 (EERHGGRGERERHGREER) and 549–561 (REGRHGRGRREEV).

Belongs to the 7S seed storage protein family. In terms of processing, three protein-processing steps occur in the formation of the mature protein from the primary translation product.

This is Globulin-1 S allele (GLB1) from Zea mays (Maize).